The chain runs to 1489 residues: DEAD-box ATP-dependent DNA helicase Fancm (1489 aa).

The 173-residue stretch at 65–237 (IVQSALFKNT…AVCRNLYISN (173 aa)) folds into the Helicase ATP-binding domain. 78–85 (LPTGLGKT) provides a ligand contact to ATP. Residues 185 to 188 (DEAH) carry the DEAH box motif. A Helicase C-terminal domain is found at 418–584 (KLRQVLVQHF…VVKLSLYEQN (167 aa)). Disordered regions lie at residues 591–647 (KFQP…ESQQ), 980–1000 (VEES…ESNH), 1145–1182 (TETI…PQGK), 1196–1222 (VLPC…SIQE), 1255–1293 (NPTI…PQIA), and 1452–1489 (ERRK…VLID). Positions 594–610 (PKCEEKHMEPVAEEKPK) are enriched in basic and acidic residues. Residues 611-625 (PKSAAKTKESRKRKQ) are compositionally biased toward basic residues. The span at 985-998 (RSTPISIADSSGES) shows a compositional bias: polar residues. Residues 1149–1161 (KNSENKNSHEDGS) show a composition bias toward basic and acidic residues. The segment covering 1480–1489 (SDEDDVVLID) has biased composition (acidic residues).

Belongs to the DEAD box helicase family. DEAH subfamily. FANCM sub-subfamily.

The protein resides in the nucleus. It catalyses the reaction ATP + H2O = ADP + phosphate + H(+). It carries out the reaction Couples ATP hydrolysis with the unwinding of duplex DNA by translocating in the 3'-5' direction.. A ssDNA-dependent ATPase with 3' to 5' helicase activity. Involved in multiple DNA-damage responses, some that require ATPase and helicase activity and some that are independent of these. Involved in DNA interstrand cross-link repair, probably together with Fancl and other Fanconi anemia pathway homologs. Independent of Fancl involved in DNA double strand break repair, including contributing to the synthesis-dependent strand annealing (SDSA) pathway. Probably contributes to SDSA by unwinding short duplex regions in complex D-loop-like DNA structures. The protein is DEAD-box ATP-dependent DNA helicase Fancm of Drosophila melanogaster (Fruit fly).